The following is a 338-amino-acid chain: Legumin B (338 aa).

Residues 16–162 (SLNTKEDTAK…RQHSKGRKNG (147 aa)) form a disordered region. The segment covering 18 to 44 (NTKEDTAKRLRSPQDERGQIVKVEDGL) has biased composition (basic and acidic residues). Composition is skewed to acidic residues over residues 82–92 (DEDEDEEEEEE) and 136–150 (EEEE…EEEE). Residues 174 to 321 (ENIARPSRGD…AFGLRHSQVA (148 aa)) enclose the Cupin type-1 domain.

The protein belongs to the 11S seed storage protein (globulins) family. As to quaternary structure, hexamer; each subunit is composed of an acidic and a basic chain derived from a single precursor and linked by a disulfide bond.

This protein found in the seeds of many leguminous and non-leguminous plants is the source of sulfur-containing amino acids in seed meals. This Pisum sativum (Garden pea) protein is Legumin B (LEGB).